The sequence spans 221 residues: Deoxyribose-phosphate aldolase 1 (221 aa).

D89 serves as the catalytic Proton donor/acceptor. K152 (schiff-base intermediate with acetaldehyde) is an active-site residue. The Proton donor/acceptor role is filled by K181.

It belongs to the DeoC/FbaB aldolase family. DeoC type 1 subfamily.

Its subcellular location is the cytoplasm. The enzyme catalyses 2-deoxy-D-ribose 5-phosphate = D-glyceraldehyde 3-phosphate + acetaldehyde. It participates in carbohydrate degradation; 2-deoxy-D-ribose 1-phosphate degradation; D-glyceraldehyde 3-phosphate and acetaldehyde from 2-deoxy-alpha-D-ribose 1-phosphate: step 2/2. Catalyzes a reversible aldol reaction between acetaldehyde and D-glyceraldehyde 3-phosphate to generate 2-deoxy-D-ribose 5-phosphate. The polypeptide is Deoxyribose-phosphate aldolase 1 (Oceanobacillus iheyensis (strain DSM 14371 / CIP 107618 / JCM 11309 / KCTC 3954 / HTE831)).